A 559-amino-acid chain; its full sequence is Potassium-transporting ATPase potassium-binding subunit (559 aa).

Helical transmembrane passes span 5–25 (GFLL…PLGM), 63–83 (LLAI…LLML), 131–151 (VGLT…VFAL), 173–193 (ITLW…IQQG), 254–274 (VQML…GEVV), 282–302 (AILW…MWAE), 327–347 (FGIL…CGAV), 356–376 (ALGG…FGGV), 379–399 (GLYG…LMVG), 416–436 (MIAL…ALAM), 483–503 (LLLA…VMAI), and 525–545 (ALFI…TFIP).

It belongs to the KdpA family. The system is composed of three essential subunits: KdpA, KdpB and KdpC.

It is found in the cell inner membrane. Functionally, part of the high-affinity ATP-driven potassium transport (or Kdp) system, which catalyzes the hydrolysis of ATP coupled with the electrogenic transport of potassium into the cytoplasm. This subunit binds the periplasmic potassium ions and delivers the ions to the membrane domain of KdpB through an intramembrane tunnel. The chain is Potassium-transporting ATPase potassium-binding subunit from Klebsiella pneumoniae subsp. pneumoniae (strain ATCC 700721 / MGH 78578).